Consider the following 219-residue polypeptide: Large ribosomal subunit protein uL3 (219 aa).

This sequence belongs to the universal ribosomal protein uL3 family. In terms of assembly, part of the 50S ribosomal subunit. Forms a cluster with proteins L14 and L19.

One of the primary rRNA binding proteins, it binds directly near the 3'-end of the 23S rRNA, where it nucleates assembly of the 50S subunit. This chain is Large ribosomal subunit protein uL3, found in Salinispora tropica (strain ATCC BAA-916 / DSM 44818 / JCM 13857 / NBRC 105044 / CNB-440).